The following is a 438-amino-acid chain: Glutamate-1-semialdehyde 2,1-aminomutase (438 aa).

Position 277 is an N6-(pyridoxal phosphate)lysine (Lys277).

This sequence belongs to the class-III pyridoxal-phosphate-dependent aminotransferase family. HemL subfamily. In terms of assembly, homodimer. The cofactor is pyridoxal 5'-phosphate.

It is found in the cytoplasm. The catalysed reaction is (S)-4-amino-5-oxopentanoate = 5-aminolevulinate. It participates in porphyrin-containing compound metabolism; protoporphyrin-IX biosynthesis; 5-aminolevulinate from L-glutamyl-tRNA(Glu): step 2/2. It functions in the pathway porphyrin-containing compound metabolism; chlorophyll biosynthesis. The sequence is that of Glutamate-1-semialdehyde 2,1-aminomutase from Synechococcus sp. (strain CC9311).